The sequence spans 407 residues: Serine/threonine transporter SstT (407 aa).

Transmembrane regions (helical) follow at residues 12–32 (GNLI…GISS), 42–62 (LGIL…FILI), 81–101 (IIIL…LANF), 141–161 (ALSS…GIAL), 179–199 (VLKI…GLVA), 218–238 (ILLV…IVFF), 245–267 (FPLI…SSAA), 288–308 (ISIP…IAIL), and 330–350 (IIAT…LLLI).

Belongs to the dicarboxylate/amino acid:cation symporter (DAACS) (TC 2.A.23) family.

It is found in the cell inner membrane. The catalysed reaction is L-serine(in) + Na(+)(in) = L-serine(out) + Na(+)(out). It catalyses the reaction L-threonine(in) + Na(+)(in) = L-threonine(out) + Na(+)(out). Involved in the import of serine and threonine into the cell, with the concomitant import of sodium (symport system). The polypeptide is Serine/threonine transporter SstT (Campylobacter jejuni subsp. jejuni serotype O:6 (strain 81116 / NCTC 11828)).